We begin with the raw amino-acid sequence, 400 residues long: 2-[(L-alanin-3-ylcarbamoyl)methyl]-2-hydroxybutanedioate decarboxylase (400 aa).

Residue Lys-50 is modified to N6-(pyridoxal phosphate)lysine. Pyridoxal 5'-phosphate is bound by residues Gly-228 and 266–269 (ECGR). Cys-344 functions as the Proton donor in the catalytic mechanism. A pyridoxal 5'-phosphate-binding site is contributed by Tyr-373.

This sequence belongs to the Orn/Lys/Arg decarboxylase class-II family. In terms of assembly, homodimer. Requires pyridoxal 5'-phosphate as cofactor.

It carries out the reaction 2-[(L-alanin-3-ylcarbamoyl)methyl]-2-hydroxybutanedioate + H(+) = 2-[(2-aminoethylcarbamoyl)methyl]-2-hydroxybutanedioate + CO2. It functions in the pathway siderophore biosynthesis. Functionally, catalyzes the decarboxylation of citryl-L-2,3-diaminopropionic acid to citryl-diaminoethane, the second step in staphyloferrin B biosynthesis. This Staphylococcus aureus (strain NCTC 8325 / PS 47) protein is 2-[(L-alanin-3-ylcarbamoyl)methyl]-2-hydroxybutanedioate decarboxylase.